The chain runs to 432 residues: uncharacterized protein (432 aa).

The protein to M.jannaschii MJ0977.

This is an uncharacterized protein from Methanocaldococcus jannaschii (strain ATCC 43067 / DSM 2661 / JAL-1 / JCM 10045 / NBRC 100440) (Methanococcus jannaschii).